The sequence spans 1779 residues: Fibronectin type III domain-containing protein 1 (1779 aa).

Positions 1 to 29 (MAPEARASPRLLLRAALLLLAALLPVASS) are cleaved as a signal peptide. 4 Fibronectin type-III domains span residues 33–126 (PVDH…KAPR), 103–203 (PNKP…AEED), 207–302 (VPED…TPES), and 307–402 (APEN…IPTT). Polar residues predominate over residues 400–413 (PTTSSTEASVQPNG). Disordered regions lie at residues 400–442 (PTTS…MPPA), 459–1108 (NGVA…RNLD), 1120–1227 (EENT…KPNG), and 1330–1401 (PTTT…PPGT). The span at 423–437 (QQPSSSAPKVAASSQ) shows a compositional bias: low complexity. Residues 493-506 (NPRSSRLETLNQKQ) are compositionally biased toward polar residues. Residues 534-554 (SRKEGMDRRGPSLDPHPHPRV) are compositionally biased toward basic and acidic residues. Polar residues-rich tracts occupy residues 557 to 570 (SASSAYHQLSSTDN) and 590 to 607 (SSGSSPKNPGRSRPTSAP). Positions 629–640 (ASSSTSRQSHSS) are enriched in low complexity. Serine 651 carries the phosphoserine modification. Residues 676–694 (HASSSHTTSRTASSSHPSA) are compositionally biased toward low complexity. Serine 699 carries the phosphoserine modification. The segment covering 707–720 (DSDRAAEDTIRRAE) has biased composition (basic and acidic residues). 2 stretches are compositionally biased toward polar residues: residues 763-784 (PSVSPQSTSASKVLTRSPSLPA) and 861-875 (PLSSKAQGFQQSTTD). Low complexity predominate over residues 879–904 (PQTSPASTSRQPSPARPPASRSQPSP). Composition is skewed to polar residues over residues 957 to 971 (APQNQNEGAQSTYED) and 1003 to 1020 (VGSQSWSSDNRPQPSQAG). The segment covering 1085 to 1097 (LSTSVKKWPSSSS) has biased composition (low complexity). A compositionally biased stretch (basic and acidic residues) spans 1098–1108 (PRDKYADRNLD). 2 stretches are compositionally biased toward polar residues: residues 1147 to 1159 (NPATASPIANTHS) and 1166 to 1177 (RAPSSYSSTTPM). The span at 1330-1389 (PTTTMPPSTTTTTVPPTTTLPPTTTTTRRTTTTRRTTTTRRPTTTTRATRRTTTTTTTPE) shows a compositional bias: low complexity. The Fibronectin type-III 5 domain maps to 1543-1637 (APRNITVVAM…PSVSFVTESD (95 aa)). Asparagine 1546 is a glycosylation site (N-linked (GlcNAc...) asparagine).

The protein resides in the secreted. Its function is as follows. May be an activator of G protein signaling. The chain is Fibronectin type III domain-containing protein 1 (Fndc1) from Rattus norvegicus (Rat).